A 332-amino-acid chain; its full sequence is UPF0194 membrane protein YbhG (332 aa).

Residues 1–16 form the signal peptide; the sequence is MMKKPVVIGLAVVVLA. Positions 108–209 form a coiled coil; it reads EEIAQAAAAV…LNLQDSTLIA (102 aa).

Belongs to the UPF0194 family.

The protein resides in the periplasm. The protein is UPF0194 membrane protein YbhG of Escherichia coli (strain 55989 / EAEC).